Reading from the N-terminus, the 341-residue chain is S-adenosylmethionine:tRNA ribosyltransferase-isomerase (341 aa).

It belongs to the QueA family. Monomer.

The protein localises to the cytoplasm. It carries out the reaction 7-aminomethyl-7-carbaguanosine(34) in tRNA + S-adenosyl-L-methionine = epoxyqueuosine(34) in tRNA + adenine + L-methionine + 2 H(+). It participates in tRNA modification; tRNA-queuosine biosynthesis. Its function is as follows. Transfers and isomerizes the ribose moiety from AdoMet to the 7-aminomethyl group of 7-deazaguanine (preQ1-tRNA) to give epoxyqueuosine (oQ-tRNA). This chain is S-adenosylmethionine:tRNA ribosyltransferase-isomerase, found in Chlorobium chlorochromatii (strain CaD3).